We begin with the raw amino-acid sequence, 258 residues long: Glutamate racemase (258 aa).

Substrate contacts are provided by residues 12–13 and 44–45; these read DS and YG. Catalysis depends on cysteine 75, which acts as the Proton donor/acceptor. 76 to 77 provides a ligand contact to substrate; it reads NT. The active-site Proton donor/acceptor is cysteine 186. 187–188 serves as a coordination point for substrate; sequence TH.

It belongs to the aspartate/glutamate racemases family.

The enzyme catalyses L-glutamate = D-glutamate. The protein operates within cell wall biogenesis; peptidoglycan biosynthesis. Functionally, provides the (R)-glutamate required for cell wall biosynthesis. The sequence is that of Glutamate racemase from Clostridium botulinum (strain Alaska E43 / Type E3).